A 493-amino-acid polypeptide reads, in one-letter code: Transmembrane protein 145 (493 aa).

The helical transmembrane segment at 9–29 threads the bilayer; it reads LRRLLPPLLLLLLSLPPRARA. Asn-35 is a glycosylation site (N-linked (GlcNAc...) asparagine). 7 helical membrane passes run 175–195, 207–227, 241–261, 282–302, 318–338, 349–369, and 381–401; these read VTFL…GYLL, MFMA…IYWG, ILAK…LILL, VYMT…AEFF, GLIG…LVSL, VPFF…ALIA, and IVNG…LIMT. Asn-444 is a glycosylation site (N-linked (GlcNAc...) asparagine). The interval 464-493 is disordered; that stretch reads PATSPLPRAAPDSGLPLFRDLRPPGPLRDL.

The protein resides in the membrane. The protein is Transmembrane protein 145 (TMEM145) of Homo sapiens (Human).